The following is a 233-amino-acid chain: LexA repressor (233 aa).

A DNA-binding region (H-T-H motif) is located at residues 26-46; the sequence is FEEMKEALDLKSKSGVHRLIS. Residues Ser-153 and Lys-191 each act as for autocatalytic cleavage activity in the active site.

It belongs to the peptidase S24 family. Homodimer.

The enzyme catalyses Hydrolysis of Ala-|-Gly bond in repressor LexA.. In terms of biological role, represses a number of genes involved in the response to DNA damage (SOS response), including recA and lexA. In the presence of single-stranded DNA, RecA interacts with LexA causing an autocatalytic cleavage which disrupts the DNA-binding part of LexA, leading to derepression of the SOS regulon and eventually DNA repair. The protein is LexA repressor of Erythrobacter litoralis (strain HTCC2594).